The primary structure comprises 356 residues: DNA polymerase IV (356 aa).

The UmuC domain maps to 7–188; the sequence is IIHIDMDAFY…IPVTKFYGVG (182 aa). Asp-11 and Asp-106 together coordinate Mg(2+). The active site involves Glu-107.

This sequence belongs to the DNA polymerase type-Y family. In terms of assembly, monomer. Mg(2+) is required as a cofactor.

Its subcellular location is the cytoplasm. The enzyme catalyses DNA(n) + a 2'-deoxyribonucleoside 5'-triphosphate = DNA(n+1) + diphosphate. In terms of biological role, poorly processive, error-prone DNA polymerase involved in untargeted mutagenesis. Copies undamaged DNA at stalled replication forks, which arise in vivo from mismatched or misaligned primer ends. These misaligned primers can be extended by PolIV. Exhibits no 3'-5' exonuclease (proofreading) activity. May be involved in translesional synthesis, in conjunction with the beta clamp from PolIII. The protein is DNA polymerase IV of Listeria welshimeri serovar 6b (strain ATCC 35897 / DSM 20650 / CCUG 15529 / CIP 8149 / NCTC 11857 / SLCC 5334 / V8).